The sequence spans 251 residues: Small ribosomal subunit protein uS2 (251 aa).

This sequence belongs to the universal ribosomal protein uS2 family.

This is Small ribosomal subunit protein uS2 from Cereibacter sphaeroides (strain ATCC 17029 / ATH 2.4.9) (Rhodobacter sphaeroides).